Here is a 674-residue protein sequence, read N- to C-terminus: Xaa-Pro aminopeptidase 2 (674 aa).

A signal peptide spans 1–21; it reads MARAHWGCCPWLVLLCACAWG. 3 N-linked (GlcNAc...) asparagine glycosylation sites follow: N35, N49, and N65. R116 lines the substrate pocket. Residues N278 and N291 are each glycosylated (N-linked (GlcNAc...) asparagine). H430 lines the substrate pocket. 3 residues coordinate Zn(2+): D450, D461, and H524. Residues H524, H533, and E555 each coordinate substrate. The Zn(2+) site is built by E555 and E569. A lipid anchor (GPI-anchor amidated alanine) is attached at A649. The propeptide at 650–674 is removed in mature form; sequence ARAPDTASWASVLVVSTLAILGWSV.

Belongs to the peptidase M24B family. In terms of assembly, homotrimer. Zn(2+) serves as cofactor. N-glycosylated. In terms of tissue distribution, expressed in kidney, lung, heart, placenta, liver, small intestine and colon. No expression in brain, skeletal muscle, pancreas, spleen, thymus, prostate, testis and ovary.

It is found in the cell membrane. The enzyme catalyses Release of any N-terminal amino acid, including proline, that is linked to proline, even from a dipeptide or tripeptide.. Inhibited by apstatin and the chelating agent 1,10-phenanthroline. Also inhibited by high concentrations of Zn(2+). Not significantly inhibited by bestatin or phosphoramidon. In terms of biological role, membrane-bound metalloprotease which catalyzes the removal of a penultimate prolyl residue from the N-termini of peptides, such as Arg-Pro-Pro. May play a role in the metabolism of the vasodilator bradykinin. The polypeptide is Xaa-Pro aminopeptidase 2 (XPNPEP2) (Homo sapiens (Human)).